A 280-amino-acid polypeptide reads, in one-letter code: Large ribosomal subunit protein uL2 (280 aa).

3 disordered regions span residues 1–20, 29–58, and 225–280; these read MAIR…SVSM, PEKS…GGGH, and VMNP…NKKR. A compositionally biased stretch (basic residues) spans 45-58; sequence SHGHITTRHRGGGH. The segment covering 253–269 has biased composition (basic and acidic residues); it reads KEGRTRRPKRYSDDMIV. Basic residues predominate over residues 270–280; sequence RRRRANKNKKR.

It belongs to the universal ribosomal protein uL2 family. In terms of assembly, part of the 50S ribosomal subunit. Forms a bridge to the 30S subunit in the 70S ribosome.

In terms of biological role, one of the primary rRNA binding proteins. Required for association of the 30S and 50S subunits to form the 70S ribosome, for tRNA binding and peptide bond formation. It has been suggested to have peptidyltransferase activity; this is somewhat controversial. Makes several contacts with the 16S rRNA in the 70S ribosome. This chain is Large ribosomal subunit protein uL2, found in Corynebacterium efficiens (strain DSM 44549 / YS-314 / AJ 12310 / JCM 11189 / NBRC 100395).